A 334-amino-acid chain; its full sequence is Oligopeptide transport ATP-binding protein OppF (334 aa).

The ABC transporter domain maps to 12–265; sequence LEIADLKVHF…PLHPYTRALM (254 aa). 57 to 64 lines the ATP pocket; it reads GESGCGKS.

This sequence belongs to the ABC transporter superfamily. As to quaternary structure, the complex is composed of two ATP-binding proteins (OppD and OppF), two transmembrane proteins (OppB and OppC) and a solute-binding protein (OppA or MppA).

Its subcellular location is the cell inner membrane. It carries out the reaction a [peptide](out) + ATP + H2O = a [peptide](in) + ADP + phosphate + H(+). The enzyme catalyses L-alanyl-gamma-D-glutamyl-meso-2,6-diaminopimelate(out) + ATP + H2O = L-alanyl-gamma-D-glutamyl-meso-2,6-diaminopimelate(in) + ADP + phosphate + H(+). Its function is as follows. Part of the ABC transporter complex OppABCDF involved in the uptake of oligopeptides and of the ABC transporter complex MppA-OppBCDF involved in the uptake of the cell wall murein tripeptide L-alanyl-gamma-D-glutamyl-meso-diaminopimelate. Probably responsible for energy coupling to the transport system. Plays an important nutritional role and is involved in the recycling of cell wall peptides. This Escherichia coli (strain K12) protein is Oligopeptide transport ATP-binding protein OppF (oppF).